The sequence spans 347 residues: uncharacterized protein (347 aa).

This is an uncharacterized protein from Magallana gigas (Pacific oyster).